The sequence spans 504 residues: Histidine ammonia-lyase (504 aa).

The segment at residues 142 to 144 is a cross-link (5-imidazolinone (Ala-Gly)); it reads ASG. Ser-143 bears the 2,3-didehydroalanine (Ser) mark.

The protein belongs to the PAL/histidase family. In terms of processing, contains an active site 4-methylidene-imidazol-5-one (MIO), which is formed autocatalytically by cyclization and dehydration of residues Ala-Ser-Gly.

It localises to the cytoplasm. It catalyses the reaction L-histidine = trans-urocanate + NH4(+). It functions in the pathway amino-acid degradation; L-histidine degradation into L-glutamate; N-formimidoyl-L-glutamate from L-histidine: step 1/3. In Staphylococcus aureus (strain USA300), this protein is Histidine ammonia-lyase.